Here is a 143-residue protein sequence, read N- to C-terminus: MNAKKRKGSAVERNIVSRLRDKGFAVVRAPASGSKRKDPIPDIIALKNGVIILIEMKSRKDIEGKIYVRREQAEGIIEFARKSGGSLFLGVKKPGVLKFIPFEKLRRTETGNYVADSEIEGLDLEDLVRLVEAKISRTLDNFL.

A Mg(2+)-binding site is contributed by glutamate 12. Serine 32 is a catalytic residue. Mg(2+)-binding residues include aspartate 42 and glutamate 55.

Belongs to the Holliday junction resolvase Hjc family. As to quaternary structure, homodimer. Interacts with PCNA subunit PCNA1. Mg(2+) serves as cofactor.

The catalysed reaction is Endonucleolytic cleavage at a junction such as a reciprocal single-stranded crossover between two homologous DNA duplexes (Holliday junction).. With respect to regulation, autoinhibits at very high concentrations, possibly because of extreme junction distortion. Inhibition (and activity at low concentrations of enzyme) is stimulated by dsDNA and Sso7d. Activity stimulated by PCNA subunit PCNA1. Functionally, a structure-specific endonuclease that resolves Holliday junction (HJ) intermediates during genetic recombination; may have some degree of sequence preference in a mobile junction. Cleaves 4-way DNA junctions introducing paired nicks in opposing strands, leaving a 5'-terminal phosphate and a 3'-terminal hydroxyl group that are subsequently ligated to produce recombinant products. Can cleave all 4 strands 3 bases 3' of the junction center. Cleaves both mobile and immobile junctions. Modifies the structure of the 4-way DNA junction, a model Holliday junction structure. The protein forms multiple complexes with 4-way DNA, suggesting more than 1 homodimer can bind to each junction. In Saccharolobus solfataricus (strain ATCC 35092 / DSM 1617 / JCM 11322 / P2) (Sulfolobus solfataricus), this protein is Crossover junction endodeoxyribonuclease Hjc.